Reading from the N-terminus, the 24-residue chain is Hyaluronidase (24 aa).

In terms of tissue distribution, expressed by the venom gland.

It is found in the secreted. It carries out the reaction Random hydrolysis of (1-&gt;4)-linkages between N-acetyl-beta-D-glucosamine and D-glucuronate residues in hyaluronate.. Possesses high activity against hyaluronan in vitro. This Tityus stigmurus (Brazilian scorpion) protein is Hyaluronidase.